The following is a 173-amino-acid chain: Ribosome maturation factor RimM (173 aa).

A PRC barrel domain is found at 97–170; sequence EHEYYYHEII…RIRVHIMEGL (74 aa).

The protein belongs to the RimM family. Binds ribosomal protein uS19.

Its subcellular location is the cytoplasm. Functionally, an accessory protein needed during the final step in the assembly of 30S ribosomal subunit, possibly for assembly of the head region. Essential for efficient processing of 16S rRNA. May be needed both before and after RbfA during the maturation of 16S rRNA. It has affinity for free ribosomal 30S subunits but not for 70S ribosomes. This Shouchella clausii (strain KSM-K16) (Alkalihalobacillus clausii) protein is Ribosome maturation factor RimM.